The following is a 175-amino-acid chain: Cell division protein SepF (175 aa).

Over residues 20–29 (RYEDYDDYDD) the composition is skewed to acidic residues. Residues 20–88 (RYEDYDDYDD…ERPTPPLRVT (69 aa)) form a disordered region. Composition is skewed to basic and acidic residues over residues 30–47 (AEPH…DLGS) and 54–73 (RRMD…RRVS).

It belongs to the SepF family. In terms of assembly, homodimer. Interacts with FtsZ.

It localises to the cytoplasm. In terms of biological role, cell division protein that is part of the divisome complex and is recruited early to the Z-ring. Probably stimulates Z-ring formation, perhaps through the cross-linking of FtsZ protofilaments. Its function overlaps with FtsA. The chain is Cell division protein SepF from Acidothermus cellulolyticus (strain ATCC 43068 / DSM 8971 / 11B).